We begin with the raw amino-acid sequence, 131 residues long: Conotoxin Cal8.2 (131 aa).

An N-terminal signal peptide occupies residues 1–19; it reads MKLLLTLLLGSALMCITLA. Residues 20–38 constitute a propeptide that is removed on maturation; that stretch reads DECGLGTHRPVKEVIDNVR.

Post-translationally, contains 4 disulfide bonds. Expressed by the venom duct.

It is found in the secreted. Probable neurotoxin with unknown target. Possibly targets ion channels. The chain is Conotoxin Cal8.2 from Californiconus californicus (California cone).